The sequence spans 322 residues: MTEARPIILTCGEPAGVGPELAPKALASGVPFVFLGDPRHLPEGTAWAEVTAPGEPVADGVLAVLRHDFPAPARPGQPDPANAPAVIEVIARAVDLAMSGAAGGICTLPINKEALKRGAGFGFPGHTEYLAHLAGDVPVVMMLASTTVQPPCRVVPVTIHIPLSEVPLALTPLRLEQAIRITDAAMRRDFGLAQPRLAIAGLNPHAGENGVMGDEEARWMAPLIERLRREGFDLRGPLPADTMFHPAARARYDAALCAYHDQALIPIKTLDFAGGVNITLGLPFVRTSPDHGTAFDIAGQGIADAESVIAALRMAHEMAARR.

Positions 126 and 127 each coordinate substrate. A divalent metal cation-binding residues include His-160, His-205, and His-260. Lys-268, Asn-277, and Arg-286 together coordinate substrate.

This sequence belongs to the PdxA family. In terms of assembly, homodimer. Zn(2+) serves as cofactor. Requires Mg(2+) as cofactor. Co(2+) is required as a cofactor.

The protein resides in the cytoplasm. It carries out the reaction 4-(phosphooxy)-L-threonine + NAD(+) = 3-amino-2-oxopropyl phosphate + CO2 + NADH. It participates in cofactor biosynthesis; pyridoxine 5'-phosphate biosynthesis; pyridoxine 5'-phosphate from D-erythrose 4-phosphate: step 4/5. Functionally, catalyzes the NAD(P)-dependent oxidation of 4-(phosphooxy)-L-threonine (HTP) into 2-amino-3-oxo-4-(phosphooxy)butyric acid which spontaneously decarboxylates to form 3-amino-2-oxopropyl phosphate (AHAP). This chain is 4-hydroxythreonine-4-phosphate dehydrogenase, found in Paracoccus denitrificans (strain Pd 1222).